The primary structure comprises 504 residues: Anaerobic nitric oxide reductase transcription regulator NorR (504 aa).

4-aspartylphosphate is present on Asp57. Positions 187 to 416 (MIGLSPGMTQ…LEHAIHRAVV (230 aa)) constitute a Sigma-54 factor interaction domain. ATP contacts are provided by residues 215–222 (GETGTGKE) and 278–287 (ADNGTLFLDE). The H-T-H motif DNA-binding region spans 479-498 (WAACARMLETDVANLHRLAK).

It functions in the pathway nitrogen metabolism; nitric oxide reduction. Functionally, required for the expression of anaerobic nitric oxide (NO) reductase, acts as a transcriptional activator for at least the norVW operon. Activation also requires sigma-54. The protein is Anaerobic nitric oxide reductase transcription regulator NorR of Escherichia coli O17:K52:H18 (strain UMN026 / ExPEC).